We begin with the raw amino-acid sequence, 422 residues long: 2,3-bisphosphoglycerate-independent phosphoglycerate mutase (422 aa).

The disordered stretch occupies residues 173-194; it reads DADPKRVGKPVKDVKPTSDDPA. Residues 174-190 show a composition bias toward basic and acidic residues; it reads ADPKRVGKPVKDVKPTS.

This sequence belongs to the BPG-independent phosphoglycerate mutase family. A-PGAM subfamily.

It carries out the reaction (2R)-2-phosphoglycerate = (2R)-3-phosphoglycerate. Its pathway is carbohydrate degradation; glycolysis; pyruvate from D-glyceraldehyde 3-phosphate: step 3/5. Functionally, catalyzes the interconversion of 2-phosphoglycerate and 3-phosphoglycerate. The chain is 2,3-bisphosphoglycerate-independent phosphoglycerate mutase from Methanopyrus kandleri (strain AV19 / DSM 6324 / JCM 9639 / NBRC 100938).